The sequence spans 772 residues: Subtilisin-like protease SBT5.3 (772 aa).

Positions 1 to 25 (MKLTHNFSFLLLLLLVHMSSKHILA) are cleaved as a signal peptide. Residues 31–116 (SYVVYFGAHS…VFPNKALKLH (86 aa)) enclose the Inhibitor I9 domain. Residues 120 to 628 (SWDFLGLEHN…AGHVQPNLAV (509 aa)) form the Peptidase S8 domain. The active-site Charge relay system is D153. Residue N211 is glycosylated (N-linked (GlcNAc...) asparagine). H223 serves as the catalytic Charge relay system. N246, N306, and N396 each carry an N-linked (GlcNAc...) asparagine glycan. The 83-residue stretch at 398–480 (SALDAQLCKL…KDSFAVSRYI (83 aa)) folds into the PA domain. The Charge relay system role is filled by S561. N606, N651, N662, N684, and N725 each carry an N-linked (GlcNAc...) asparagine glycan.

The protein belongs to the peptidase S8 family. Expressed specifically at sites of lateral root emergence.

It localises to the secreted. Its subcellular location is the cell wall. Its function is as follows. Serine protease. Has a substrate preference for the hydrophobic residues Phe and Ala and the basic residue Asp in the P1 position, and for Asp, Leu or Ala in the P1' position. May play a role in the degradation of structural proteins in the extracellular matrix of cells located above sites of lateral root formation and thus facilitate lateral root emergence. The chain is Subtilisin-like protease SBT5.3 (AIR3) from Arabidopsis thaliana (Mouse-ear cress).